Reading from the N-terminus, the 830-residue chain is Interleukin-4 receptor subunit alpha (830 aa).

Positions M1–G32 are cleaved as a signal peptide. Residues V33–R240 are Extracellular-facing. C41 and C51 are disulfide-bonded. N-linked (GlcNAc...) asparagine glycans are attached at residues N60 and N78. Cysteines 82 and 94 form a disulfide. Residues N120, N142, and N170 are each glycosylated (N-linked (GlcNAc...) asparagine). Residues A133–Y232 enclose the Fibronectin type-III domain. Phosphoserine is present on S172. N-linked (GlcNAc...) asparagine glycans are attached at residues N184 and N217. The WSXWS motif motif lies at W220–S224. Residues L241 to I264 form a helical membrane-spanning segment. The Cytoplasmic segment spans residues R265–S830. The short motif at W270 to A278 is the Box 1 motif element. Residues E378 to D387 are compositionally biased toward acidic residues. Disordered regions lie at residues E378–Q403 and M450–S488. Positions E444–S564 are required for IRS1 activation and IL4-induced cell growth. Position 504 is a phosphotyrosine (Y504). 2 disordered regions span residues S508 to Y610 and C623 to K696. Residues G518–E534 show a composition bias toward acidic residues. Pro residues predominate over residues P538–Q551. Residues S564–L662 are required for IL4-induced gene expression. Positions A570–G582 are enriched in low complexity. 2 positions are modified to phosphotyrosine: Y583 and Y610. The segment covering C623–E635 has biased composition (polar residues). Y638 carries the post-translational modification Phosphotyrosine. Composition is skewed to pro residues over residues P646–T655 and E665–P676. Positions I716–L721 match the ITIM motif motif. The segment at S811 to S830 is disordered.

It belongs to the type I cytokine receptor family. Type 4 subfamily. As to quaternary structure, the functional IL4 receptor is formed by initial binding of IL4 to IL4R. Subsequent recruitment to the complex of the common gamma chain, in immune cells, creates a type I receptor and, in non-immune cells, of IL13RA1 forms a type II receptor. IL4R can also interact with the IL13/IL13RA1 complex to form a similar type II receptor. Interacts with PIK3C3. Interacts with the SH2-containing phosphatases, PTPN6/SHIP1, PTPN11/SHIP2 and INPP5D/SHIP. Interacts with JAK1 through a Box 1-containing region; inhibited by SOCS5. Interacts with SOCS5; inhibits IL4 signaling. Interacts with JAK3. Interacts with CLM1. Interacts with IL13RA2. In terms of processing, on IL4 binding, phosphorylated on C-terminal tyrosine residues.

It is found in the membrane. Its function is as follows. Receptor for both interleukin 4 and interleukin 13. Couples to the JAK1/2/3-STAT6 pathway. The IL4 response is involved in promoting Th2 differentiation. The IL4/IL13 responses are involved in regulating IgE production and, chemokine and mucus production at sites of allergic inflammation. In certain cell types, can signal through activation of insulin receptor substrates, IRS1/IRS2. The sequence is that of Interleukin-4 receptor subunit alpha (IL4R) from Sus scrofa (Pig).